Here is a 493-residue protein sequence, read N- to C-terminus: MAKELKELTPRSESYSQWYQDLVIKADLAENSAVRGCMVIKPYGYAIWEKMQRQLDDMFKETGHVNAYFPLFIPKSFLSREAEHVEGFAKECAVVTHYRLKANPDGDGVVVDPQAKLEEELIVRPTSETIIWNTYKNWIQSHRDLPILCNQWANVVRWEMRTRLFLRTAEFLWQEGHTAHATKEEAEEEARRMLEVYATFAEEYMAMPVVKGVKSANERFAGAVDTYTIEALMQDGKALQSGTSHFLGQNFAKAFNVTFADKDGNRDFVWATSWGVSTRLMGALIMSHSDDNGLVLPPKLAPYQVVIVPIYRNEEQLAQIDEKATQIIQALRAKGISVKYDNSDNKKPGWKFAEYELKGVPVRLAMGARDLENNTIEIARRDTLTKETVGLDGIEETVATLLDDIQKNIFQKALNYRKEHTITVDSYEEFKEKIEDGGFILAHWDGTSETEERIKAETKATIRCIPLNGDMTPGKCMVTGKPSPQRVLFARAY.

It belongs to the class-II aminoacyl-tRNA synthetase family. ProS type 3 subfamily. In terms of assembly, homodimer.

It localises to the cytoplasm. It catalyses the reaction tRNA(Pro) + L-proline + ATP = L-prolyl-tRNA(Pro) + AMP + diphosphate. Catalyzes the attachment of proline to tRNA(Pro) in a two-step reaction: proline is first activated by ATP to form Pro-AMP and then transferred to the acceptor end of tRNA(Pro). In Porphyromonas gingivalis (strain ATCC 33277 / DSM 20709 / CIP 103683 / JCM 12257 / NCTC 11834 / 2561), this protein is Proline--tRNA ligase.